The sequence spans 889 residues: Inter-alpha-trypsin inhibitor heavy chain H3 (889 aa).

Positions Met-1–Gly-21 are cleaved as a signal peptide. The propeptide occupies Phe-22–Arg-33. Residues Leu-29 to Glu-158 form the VIT domain. Asn-91 carries N-linked (GlcNAc...) asparagine glycosylation. The VWFA domain maps to Asn-284 to Val-467. A glycan (N-linked (GlcNAc...) asparagine) is linked at Asn-580. An Aspartate 1-(chondroitin 4-sulfate)-ester modification is found at Asp-649. The propeptide occupies Pro-650–Phe-889.

It belongs to the ITIH family. I-alpha-I plasma protease inhibitors are assembled from one or two heavy chains (HC) and one light chain, bikunin. Pre-alpha-inhibitor (P-alpha-I) is composed of ITIH3/HC3 and bikunin. Post-translationally, heavy chains are linked to bikunin via chondroitin 4-sulfate esterified to the alpha-carboxyl of the C-terminal aspartate after propeptide cleavage. As to expression, expressed in both liver and brain.

Its subcellular location is the secreted. In terms of biological role, may act as a carrier of hyaluronan in serum or as a binding protein between hyaluronan and other matrix protein, including those on cell surfaces in tissues to regulate the localization, synthesis and degradation of hyaluronan which are essential to cells undergoing biological processes. The protein is Inter-alpha-trypsin inhibitor heavy chain H3 (Itih3) of Mus musculus (Mouse).